A 686-amino-acid polypeptide reads, in one-letter code: Calponin homology and LIM domain-containing protein (686 aa).

One can recognise a Calponin-homology (CH) domain in the interval 15-120 (ELALDESRDW…ITLYWLGRAA (106 aa)). 2 LIM zinc-binding domains span residues 139-200 (MNCS…ATNL) and 219-279 (NKCS…SCGK). Positions 305–314 (KQVMDKDGHD) are enriched in basic and acidic residues. A disordered region spans residues 305-345 (KQVMDKDGHDHHHHNHNKPTTTTTTTNSNSPLAKKKSDSCK). Over residues 322–333 (KPTTTTTTTNSN) the composition is skewed to low complexity. LIM zinc-binding domains lie at 373-435 (GTCG…NNKS), 437-495 (KNCH…LNQY), 519-579 (DRCV…IQQS), and 583-658 (DHCA…ASSS).

In terms of assembly, interacts with limF and rab21.

Its function is as follows. Involved in the regulation of phagocytosis. May repress rab21. The polypeptide is Calponin homology and LIM domain-containing protein (ChLim) (Dictyostelium discoideum (Social amoeba)).